The chain runs to 219 residues: Probable GTP-binding protein EngB (219 aa).

The EngB-type G domain maps to 33 to 217 (GPLEIAFAGR…RAAICETVGH (185 aa)). Residues 41-48 (GRSNVGKS), 68-72 (GRTQE), 95-98 (DMPG), 162-165 (TKTD), and 196-198 (TSS) contribute to the GTP site. The Mg(2+) site is built by serine 48 and threonine 70.

It belongs to the TRAFAC class TrmE-Era-EngA-EngB-Septin-like GTPase superfamily. EngB GTPase family. Mg(2+) is required as a cofactor.

Necessary for normal cell division and for the maintenance of normal septation. The sequence is that of Probable GTP-binding protein EngB from Allorhizobium ampelinum (strain ATCC BAA-846 / DSM 112012 / S4) (Agrobacterium vitis (strain S4)).